The chain runs to 213 residues: Penicillin-binding protein activator LpoB (213 aa).

Residues 1 to 19 form the signal peptide; the sequence is MMKMNRYALVAALAIFLSG. Residue Cys20 is the site of N-palmitoyl cysteine attachment. The S-diacylglycerol cysteine moiety is linked to residue Cys20. Residues 26-71 are disordered; sequence PAPVDEVKPAPEQPAEPQQPVPVVPSVPTIPQQPGPIEHEDQTAQP. The segment covering 36 to 50 has biased composition (pro residues); sequence PEQPAEPQQPVPVVP.

It belongs to the LpoB family. As to quaternary structure, interacts with PBP1b.

It is found in the cell outer membrane. Functionally, regulator of peptidoglycan synthesis that is essential for the function of penicillin-binding protein 1B (PBP1b). In Citrobacter koseri (strain ATCC BAA-895 / CDC 4225-83 / SGSC4696), this protein is Penicillin-binding protein activator LpoB.